We begin with the raw amino-acid sequence, 300 residues long: Quinolinate synthase (300 aa).

Iminosuccinate-binding residues include H21 and S38. Residue C83 coordinates [4Fe-4S] cluster. Iminosuccinate-binding positions include 109–111 (YVN) and S126. C170 lines the [4Fe-4S] cluster pocket. Iminosuccinate contacts are provided by residues 196 to 198 (HPE) and T213. C256 is a binding site for [4Fe-4S] cluster.

This sequence belongs to the quinolinate synthase family. Type 2 subfamily. Monomer. Homodimer. The cofactor is [4Fe-4S] cluster.

The protein resides in the cytoplasm. The enzyme catalyses iminosuccinate + dihydroxyacetone phosphate = quinolinate + phosphate + 2 H2O + H(+). Its pathway is cofactor biosynthesis; NAD(+) biosynthesis; quinolinate from iminoaspartate: step 1/1. Functionally, catalyzes the condensation of iminoaspartate with dihydroxyacetone phosphate to form quinolinate. The protein is Quinolinate synthase of Pyrococcus horikoshii (strain ATCC 700860 / DSM 12428 / JCM 9974 / NBRC 100139 / OT-3).